Consider the following 31-residue polypeptide: Kappa-sparatoxin-Hv1c (31 aa).

3 disulfide bridges follow: C2–C16, C9–C21, and C15–C25. Residue W31 is modified to Tryptophan amide.

As to expression, expressed by the venom gland.

Its subcellular location is the secreted. Functionally, blocks transient outward voltage-gated potassium channels in rat ventricular myocytes (thus prolonging action-potential duration) and rat Kv4.2/KCNA4 channels expressed in Xenopus oocytes. Is also a weak blocker of calcium channels in rat cerebellar granule cells. The sequence is that of Kappa-sparatoxin-Hv1c from Heteropoda venatoria (Brown huntsman spider).